We begin with the raw amino-acid sequence, 174 residues long: MIFWKTFFQNSTVGESYENNFKKLFLLDKTFDKIELKDVYLSNTKNINLYELEQLCDSVGWVKRPLKKVKIALKHSSIIISLIQKNDSSTRLVGFARATSDNGFNATIWDVVIHPDFQGLGLGKVVMHQLIKQLRQAEISTITLFAEPDVISFYRKLGFIKDPDGVKGMFWYPR.

One can recognise an N-acetyltransferase domain in the interval 42 to 174 (SNTKNINLYE…GVKGMFWYPR (133 aa)).

It belongs to the acetyltransferase family. Ycf52 subfamily.

The protein resides in the plastid. It localises to the chloroplast. This is an uncharacterized protein from Porphyra purpurea (Red seaweed).